The primary structure comprises 247 residues: OCIA domain-containing protein 1 (247 aa).

Residues 1–112 (MNGRADFREP…KKLENSPLGE (112 aa)) form the OCIA domain. Serine 108 and serine 116 each carry phosphoserine. The segment at 116-247 (SGELRRSLPP…VNKYGDTWDE (132 aa)) is disordered. Polar residues-rich tracts occupy residues 136-146 (SNVSGQSSFGT) and 168-177 (ASMNESTPTG). Composition is skewed to basic and acidic residues over residues 192–210 (DSPK…KNRE) and 218–240 (HKTD…KVNK). Phosphoserine is present on residues serine 193 and serine 198.

The protein belongs to the OCIAD1 family. In terms of assembly, interacts with OCIAD2. Interacts with STAT3.

It is found in the endosome. Functionally, maintains stem cell potency. Increases STAT3 phosphorylation and controls ERK phosphorylation. May act as a scaffold, increasing STAT3 recruitment onto endosomes. The sequence is that of OCIA domain-containing protein 1 from Rattus norvegicus (Rat).